A 489-amino-acid chain; its full sequence is MKYHDLRDFLTLLEQQGELKRITLPVDPHLEITEIADRTLRAGGPALLFENPKGYSMPVLCNLFGTPRRVALGMGQEDVSSLREVGKLLAFLKEPEPPKGFRDLFDKLPQFKQVLNMPTKRLRGAPCQQKIIQGDDVDLNKIPIMTCWPEDAAPLITWGLTVTRGPHKERQNLGIYRQQLIGKNKLIMRWLSHRGGALDFQEWCAAHPGERFPVSVALGADPATILGAVTPVPDTLSEYAFAGLLRGTKTEVVKCVSNDLEVPASAEIVLEGYIEAGEMAPEGPYGDHTGYYNEVDSFPVFTVTHITQREDAIYHSTYTGRPPDEPAVLGVALNEVFVPILQKQFPEIVDFYLPPEGCSYRLAVVTMKKQYAGHAKRVMMGVWSFLRQFMYTKFVIVCDDDVNARDWNDVIWAITTRMDPARDTVLVENTPIDYLDFASPVSGLGSKMGLDATNKWPGETQREWGRPIKKDPQVTARIDAIWDELAIFK.

Mn(2+) is bound at residue N172. Prenylated FMN contacts are provided by residues 175–177 (IYR), 189–191 (RWL), and 194–195 (RG). E238 contributes to the Mn(2+) binding site. Residue D287 is the Proton donor of the active site.

It belongs to the UbiD family. As to quaternary structure, homohexamer. Prenylated FMN serves as cofactor. It depends on Mn(2+) as a cofactor.

The protein localises to the cell membrane. The enzyme catalyses a 4-hydroxy-3-(all-trans-polyprenyl)benzoate + H(+) = a 2-(all-trans-polyprenyl)phenol + CO2. Its pathway is cofactor biosynthesis; ubiquinone biosynthesis. Its function is as follows. Catalyzes the decarboxylation of 3-octaprenyl-4-hydroxy benzoate to 2-octaprenylphenol, an intermediate step in ubiquinone biosynthesis. The polypeptide is 3-octaprenyl-4-hydroxybenzoate carboxy-lyase (Klebsiella pneumoniae (strain 342)).